We begin with the raw amino-acid sequence, 146 residues long: ATP synthase epsilon chain (146 aa).

The protein belongs to the ATPase epsilon chain family. As to quaternary structure, F-type ATPases have 2 components, CF(1) - the catalytic core - and CF(0) - the membrane proton channel. CF(1) has five subunits: alpha(3), beta(3), gamma(1), delta(1), epsilon(1). CF(0) has three main subunits: a, b and c.

It localises to the cell membrane. Its function is as follows. Produces ATP from ADP in the presence of a proton gradient across the membrane. This chain is ATP synthase epsilon chain, found in Lactobacillus delbrueckii subsp. bulgaricus (strain ATCC 11842 / DSM 20081 / BCRC 10696 / JCM 1002 / NBRC 13953 / NCIMB 11778 / NCTC 12712 / WDCM 00102 / Lb 14).